Reading from the N-terminus, the 458-residue chain is Succinate-semialdehyde dehydrogenase [NADP(+)] 1 (458 aa).

NADP(+) is bound by residues 134–135 (WN), 158–161 (KHAS), and 210–211 (GS). Catalysis depends on glutamate 232, which acts as the Proton acceptor. Leucine 233 contributes to the NADP(+) binding site. Catalysis depends on cysteine 266, which acts as the Nucleophile. Glutamate 363 contributes to the NADP(+) binding site.

It belongs to the aldehyde dehydrogenase family.

The catalysed reaction is succinate semialdehyde + NADP(+) + H2O = succinate + NADPH + 2 H(+). Catalyzes the NADP(+)-dependent oxidation of succinate semialdehyde to succinate. It is believed to be the main source of succinate semialdehyde dehydrogenase activity in Mycobacterium. The sequence is that of Succinate-semialdehyde dehydrogenase [NADP(+)] 1 (gabD1) from Mycobacterium ulcerans (strain Agy99).